A 518-amino-acid polypeptide reads, in one-letter code: Vesicular inhibitory amino acid transporter (518 aa).

Topologically, residues 1-125 (MATLIRSKLS…WNVTNAIQGM (125 aa)) are cytoplasmic. Residues 126-146 (FVLGLPYAILHGGYLGLFLII) traverse the membrane as a helical segment. Topologically, residues 147–197 (FAAVVCCYTGKILIACLYEENEDGETVRVRDSYVDIANACCAPRFPKLGGR) are lumenal, vesicle. Residues 198 to 218 (VVNVAQIIELVMTCILYVVVS) traverse the membrane as a helical segment. Over 219 to 258 (GNLMYNSFPNLPISQKSWSIMATAVLLPCAFLKNLKAVSK) the chain is Cytoplasmic. The chain crosses the membrane as a helical span at residues 259-279 (FSLLCTVAHFVINILVIAYCL). Over 280 to 298 (SRARDWAWDKVKFYIDVKK) the chain is Lumenal, vesicle. Residues 299–319 (FPISIGIIVFSYTSQIFLPSL) traverse the membrane as a helical segment. At 320–334 (EGNMQSPREFHCMMN) the chain is on the cytoplasmic side. A helical membrane pass occupies residues 335–355 (WTHIAACILKGLFALVAYLTW). Residues 356–376 (ADETKEVITDNLPSTIRAVVN) lie on the Lumenal, vesicle side of the membrane. The helical transmembrane segment at 377 to 397 (LFLVSKALLSYPLPFFAAVEV) threads the bilayer. The Cytoplasmic segment spans residues 398–431 (LEKSLFQEGARAFFPNCYGGDGRLKSWGLTLRCA). Residues 432-452 (LVVFTLLMAIYVPHFALLMGL) form a helical membrane-spanning segment. At 453-454 (TG) the chain is on the lumenal, vesicle side. Residues 455–475 (SLTGAGLCFLLPSLFHLKLMW) traverse the membrane as a helical segment. Residues 476–482 (RQLLWHQ) are Cytoplasmic-facing. A helical transmembrane segment spans residues 483–503 (VFFDVSIFVIGSICSVSGFVH). Residues 504 to 518 (SLEGLIEAYAYNIED) lie on the Lumenal, vesicle side of the membrane.

It belongs to the amino acid/polyamine transporter 2 family. In terms of tissue distribution, initially expressed in late neurula stages in the anterior spinal cord. By early tailbud stages, expression extends posteriorly along the entire developing spinal cord and appears in the hindbrain. In late tailbud embryos, expressed in the forebrain, midbrain, hindbrain, spinal cord and retina. In swimming tadpoles, expressed in an extended and more intense pattern including interneurons.

Its subcellular location is the cytoplasmic vesicle membrane. It localises to the presynapse. It catalyses the reaction 4-aminobutanoate(out) + n H(+)(in) = 4-aminobutanoate(in) + n H(+)(out). The catalysed reaction is glycine(out) + n H(+)(in) = glycine(in) + n H(+)(out). It carries out the reaction beta-alanine(out) + n H(+)(in) = beta-alanine(in) + n H(+)(out). In terms of biological role, antiporter that exchanges vesicular protons for cytosolic 4-aminobutanoate or to a lesser extend glycine, thus allowing their secretion from nerve terminals. The transport is equally dependent on the chemical and electrical components of the proton gradient. May also transport beta-alanine. Acidification of GABAergic synaptic vesicles is a prerequisite for 4-aminobutanoate uptake. This Xenopus laevis (African clawed frog) protein is Vesicular inhibitory amino acid transporter.